A 421-amino-acid polypeptide reads, in one-letter code: Zinc metalloproteinase-disintegrin-like lachestatin-1 (421 aa).

Positions 10 to 206 (KYVKLVLVAD…DMPQCILEKP (197 aa)) constitute a Peptidase M12B domain. 3 disulfides stabilise this stretch: Cys-121-Cys-201, Cys-161-Cys-185, and Cys-163-Cys-168. His-146 is a Zn(2+) binding site. Residue Glu-147 is part of the active site. The Zn(2+) site is built by His-150 and His-156. One can recognise a Disintegrin domain in the interval 214–299 (PPVCGNYFVE…AECTDRFQRN (86 aa)). Residues Val-216, Asn-219, Phe-221, Glu-223, Glu-226, and Asp-229 each coordinate Ca(2+). 14 disulfides stabilise this stretch: Cys-217/Cys-246, Cys-228/Cys-241, Cys-230/Cys-236, Cys-240/Cys-263, Cys-254/Cys-260, Cys-259/Cys-285, Cys-272/Cys-292, Cys-279/Cys-310, Cys-303/Cys-315, Cys-322/Cys-372, Cys-337/Cys-383, Cys-350/Cys-360, Cys-367/Cys-409, and Cys-403/Cys-414. The D/ECD-tripeptide signature appears at 278–280 (ECD). Residues Asp-280, Met-281, Asp-283, Asp-294, and Arg-295 each coordinate Ca(2+). A glycan (N-linked (GlcNAc...) asparagine) is linked at Asn-312.

The protein belongs to the venom metalloproteinase (M12B) family. P-III subfamily. P-IIIc sub-subfamily. As to quaternary structure, homodimer; disulfide-linked. The cofactor is Zn(2+). In terms of tissue distribution, expressed by the venom gland.

The protein localises to the secreted. Functionally, snake venom zinc metalloprotease that induces apoptosis in vascular endothelial cells (VEC), without degrading the extracellular matrix (it cannot cleave collagen) or inhibiting adhesion of VEC. Has also fibrinogenolytic and hemorrhagic activities. In Lachesis muta rhombeata (Bushmaster), this protein is Zinc metalloproteinase-disintegrin-like lachestatin-1.